The sequence spans 311 residues: Salutaridine reductase (311 aa).

NADP(+) is bound by residues 21–24, Arg-44, 70–71, and Asn-98; these read NKGI and DV. Tyr-129 and Ser-180 together coordinate substrate. Residues Tyr-236, Lys-240, and 267–272 contribute to the NADP(+) site; that span reads VKTEMN. Tyr-236 functions as the Proton acceptor in the catalytic mechanism. Cys-263 and Cys-305 are oxidised to a cystine.

This sequence belongs to the short-chain dehydrogenases/reductases (SDR) family.

The catalysed reaction is (7S)-salutaridinol + NADP(+) = salutaridine + NADPH + H(+). It participates in alkaloid biosynthesis; morphine biosynthesis. Its activity is regulated as follows. Strong substrate inhibition. Was thought to be due to mutually exclusive productive and non-productive modes of substrate binding in the active site. Alternatively, SALR may undergo significant conformational changes during catalytic turnover. In terms of biological role, short-chain dehydrogenases/reductases involved in biosynthesis of morphinan-type benzylisoquinoline and opiate alkaloids natural products. Catalyzes specifically the stereospecific conversion of salutaridine to salutaridinol. In Papaver somniferum (Opium poppy), this protein is Salutaridine reductase.